A 211-amino-acid polypeptide reads, in one-letter code: Shikimate kinase (211 aa).

The interval 1–22 (MHFRYNYRMQRSKTPNTKNSDT) is disordered. Over residues 12–22 (SKTPNTKNSDT) the composition is skewed to polar residues. 36 to 41 (GSGKTT) lines the ATP pocket. Threonine 40 lines the Mg(2+) pocket. Substrate contacts are provided by aspartate 58, arginine 82, and glycine 104. Arginine 142 is a binding site for ATP. Substrate is bound at residue arginine 161. Glutamine 178 contributes to the ATP binding site.

It belongs to the shikimate kinase family. As to quaternary structure, monomer. The cofactor is Mg(2+).

The protein localises to the cytoplasm. The enzyme catalyses shikimate + ATP = 3-phosphoshikimate + ADP + H(+). It participates in metabolic intermediate biosynthesis; chorismate biosynthesis; chorismate from D-erythrose 4-phosphate and phosphoenolpyruvate: step 5/7. In terms of biological role, catalyzes the specific phosphorylation of the 3-hydroxyl group of shikimic acid using ATP as a cosubstrate. The sequence is that of Shikimate kinase from Nitrosomonas europaea (strain ATCC 19718 / CIP 103999 / KCTC 2705 / NBRC 14298).